Reading from the N-terminus, the 879-residue chain is JmjC domain-containing histone demethylation protein 1 (879 aa).

3 disordered regions span residues 1-45, 117-212, and 407-449; these read MSEQ…EEGK, STSP…PKRK, and KDVK…EGLK. A PHD-type zinc finger spans residues 23–116; it reads PEPCPLCRET…KWYCAPCLAR (94 aa). Basic and acidic residues-rich tracts occupy residues 183-192 and 407-433; these read IDMKSEREQQ and KDVK…HLTE. The JmjC domain maps to 416–598; the sequence is NDSRESSEIR…TQLRLRQIEI (183 aa). Threonine 472 provides a ligand contact to substrate. Positions 475 and 477 each coordinate Fe cation. Lysine 492 contributes to the substrate binding site. Histidine 566 contacts Fe cation. The disordered stretch occupies residues 763–879; the sequence is HPPAWSENRQ…KVEEDMDIDH (117 aa). The span at 769-782 shows a compositional bias: polar residues; sequence ENRQSPQIETTTVQ. The span at 786-818 shows a compositional bias: low complexity; it reads PSTSSSDAISGSGPGASPGASANGGANENEQAE. The segment covering 848-864 has biased composition (basic and acidic residues); the sequence is FVEKKTVWGPKLDKEKI.

Belongs to the JHDM1 histone demethylase family. Fe(2+) is required as a cofactor.

Its subcellular location is the nucleus. The catalysed reaction is N(6),N(6)-dimethyl-L-lysyl(36)-[histone H3] + 2 2-oxoglutarate + 2 O2 = L-lysyl(36)-[histone H3] + 2 formaldehyde + 2 succinate + 2 CO2. Functionally, histone demethylase that specifically demethylates 'Lys-36' of histone H3, thereby playing a central role in histone code. The chain is JmjC domain-containing histone demethylation protein 1 (JHD1) from Cryptococcus neoformans var. neoformans serotype D (strain B-3501A) (Filobasidiella neoformans).